Consider the following 142-residue polypeptide: uncharacterized protein (142 aa).

N-linked (GlcNAc...) asparagine; by host glycans are attached at residues N29 and N67. Residues 88–108 form a helical membrane-spanning segment; sequence VFYLGYPVIFIIGVTYFSIIA.

The protein resides in the membrane. This is an uncharacterized protein from Acanthamoeba polyphaga mimivirus (APMV).